Consider the following 158-residue polypeptide: Snaclec mucrocetin subunit alpha (158 aa).

Positions 1–23 (MGRFIFVSFGLLVVFLSLSGTGA) are cleaved as a signal peptide. Disulfide bonds link Cys27-Cys38, Cys55-Cys152, and Cys127-Cys144. The region spanning 34–153 (YDRYCYQAFS…CGRENPFVCK (120 aa)) is the C-type lectin domain.

The protein belongs to the snaclec family. In terms of assembly, tetramer of heterodimers of alpha and beta subunits (alphabeta)(4); disulfide-linked. In terms of tissue distribution, expressed by the venom gland.

The protein resides in the secreted. Platelet-agglutinating factor that acts in a vWF-independent manner. Binds specifically to platelet GPIbalpha (GP1BA) to a distinct binding site from that of flavocetin-A. The protein is Snaclec mucrocetin subunit alpha of Protobothrops mucrosquamatus (Taiwan habu).